Reading from the N-terminus, the 376-residue chain is Probable low-specificity L-threonine aldolase (376 aa).

The span at 1–21 (MSGSVTSTTTETRLCPSNQGS) shows a compositional bias: polar residues. The tract at residues 1–22 (MSGSVTSTTTETRLCPSNQGSA) is disordered. Lys-226 carries the N6-(pyridoxal phosphate)lysine modification.

This sequence belongs to the threonine aldolase family. As to quaternary structure, homotetramer. The cofactor is pyridoxal 5'-phosphate.

The enzyme catalyses L-threonine = acetaldehyde + glycine. The catalysed reaction is L-allo-threonine = acetaldehyde + glycine. Its pathway is amino-acid degradation; L-threonine degradation via aldolase pathway; acetaldehyde and glycine from L-threonine: step 1/1. The protein is Probable low-specificity L-threonine aldolase (gly1) of Schizosaccharomyces pombe (strain 972 / ATCC 24843) (Fission yeast).